The primary structure comprises 225 residues: Peptidyl-tRNA hydrolase (225 aa).

A tRNA-binding site is contributed by Tyr14. Residue His19 is the Proton acceptor of the active site. Residues Phe64, Asn66, and Asn112 each coordinate tRNA. Residues Ala182–Arg225 form a disordered region. Residues Ala198 to Ala209 are compositionally biased toward low complexity. Residues Pro211–Arg225 are compositionally biased toward basic and acidic residues.

Belongs to the PTH family. As to quaternary structure, monomer.

It is found in the cytoplasm. It carries out the reaction an N-acyl-L-alpha-aminoacyl-tRNA + H2O = an N-acyl-L-amino acid + a tRNA + H(+). Hydrolyzes ribosome-free peptidyl-tRNAs (with 1 or more amino acids incorporated), which drop off the ribosome during protein synthesis, or as a result of ribosome stalling. Functionally, catalyzes the release of premature peptidyl moieties from peptidyl-tRNA molecules trapped in stalled 50S ribosomal subunits, and thus maintains levels of free tRNAs and 50S ribosomes. The chain is Peptidyl-tRNA hydrolase from Cereibacter sphaeroides (strain ATCC 17029 / ATH 2.4.9) (Rhodobacter sphaeroides).